Here is a 202-residue protein sequence, read N- to C-terminus: Small ribosomal subunit protein uS4c (202 aa).

Residues 90-153 (MRLDNIIFRL…KSQAIISKNL (64 aa)) enclose the S4 RNA-binding domain.

Belongs to the universal ribosomal protein uS4 family. Part of the 30S ribosomal subunit. Contacts protein S5. The interaction surface between S4 and S5 is involved in control of translational fidelity.

The protein resides in the plastid. Its subcellular location is the chloroplast. Its function is as follows. One of the primary rRNA binding proteins, it binds directly to 16S rRNA where it nucleates assembly of the body of the 30S subunit. In terms of biological role, with S5 and S12 plays an important role in translational accuracy. This chain is Small ribosomal subunit protein uS4c (rps4), found in Rosulabryum capillare (Capillary thread-moss).